We begin with the raw amino-acid sequence, 414 residues long: Tyrosine--tRNA ligase (414 aa).

An L-tyrosine-binding site is contributed by tyrosine 38. Residues 43-52 (CTARSLHIGS) carry the 'HIGH' region motif. L-tyrosine-binding residues include tyrosine 172 and glutamine 176. A 'KMSKS' region motif is present at residues 232–236 (KMGKT). Lysine 235 serves as a coordination point for ATP. One can recognise an S4 RNA-binding domain in the interval 345–412 (ISVAKLLQLA…GKKRRIKVVV (68 aa)).

It belongs to the class-I aminoacyl-tRNA synthetase family. TyrS type 1 subfamily. As to quaternary structure, homodimer.

It localises to the cytoplasm. It carries out the reaction tRNA(Tyr) + L-tyrosine + ATP = L-tyrosyl-tRNA(Tyr) + AMP + diphosphate + H(+). In terms of biological role, catalyzes the attachment of tyrosine to tRNA(Tyr) in a two-step reaction: tyrosine is first activated by ATP to form Tyr-AMP and then transferred to the acceptor end of tRNA(Tyr). This is Tyrosine--tRNA ligase from Anaplasma marginale (strain St. Maries).